A 345-amino-acid polypeptide reads, in one-letter code: Phosphoribosylformylglycinamidine cyclo-ligase (345 aa).

It belongs to the AIR synthase family.

It is found in the cytoplasm. The enzyme catalyses 2-formamido-N(1)-(5-O-phospho-beta-D-ribosyl)acetamidine + ATP = 5-amino-1-(5-phospho-beta-D-ribosyl)imidazole + ADP + phosphate + H(+). It functions in the pathway purine metabolism; IMP biosynthesis via de novo pathway; 5-amino-1-(5-phospho-D-ribosyl)imidazole from N(2)-formyl-N(1)-(5-phospho-D-ribosyl)glycinamide: step 2/2. The chain is Phosphoribosylformylglycinamidine cyclo-ligase from Myxococcus xanthus (strain DK1622).